The primary structure comprises 422 residues: Phospho-N-acetylmuramoyl-pentapeptide-transferase (422 aa).

Transmembrane regions (helical) follow at residues L28–L48, V71–L91, L95–F115, I136–V156, A208–S228, G239–S259, L279–F299, I313–L333, and K399–L419.

The protein belongs to the glycosyltransferase 4 family. MraY subfamily. Mg(2+) is required as a cofactor.

It is found in the cell inner membrane. The catalysed reaction is UDP-N-acetyl-alpha-D-muramoyl-L-alanyl-gamma-D-glutamyl-meso-2,6-diaminopimeloyl-D-alanyl-D-alanine + di-trans,octa-cis-undecaprenyl phosphate = di-trans,octa-cis-undecaprenyl diphospho-N-acetyl-alpha-D-muramoyl-L-alanyl-D-glutamyl-meso-2,6-diaminopimeloyl-D-alanyl-D-alanine + UMP. It participates in cell wall biogenesis; peptidoglycan biosynthesis. In terms of biological role, catalyzes the initial step of the lipid cycle reactions in the biosynthesis of the cell wall peptidoglycan: transfers peptidoglycan precursor phospho-MurNAc-pentapeptide from UDP-MurNAc-pentapeptide onto the lipid carrier undecaprenyl phosphate, yielding undecaprenyl-pyrophosphoryl-MurNAc-pentapeptide, known as lipid I. The sequence is that of Phospho-N-acetylmuramoyl-pentapeptide-transferase from Phocaeicola vulgatus (strain ATCC 8482 / DSM 1447 / JCM 5826 / CCUG 4940 / NBRC 14291 / NCTC 11154) (Bacteroides vulgatus).